We begin with the raw amino-acid sequence, 156 residues long: Ribosomal RNA large subunit methyltransferase H (156 aa).

S-adenosyl-L-methionine contacts are provided by residues leucine 73, glycine 104, and 123–128; that span reads LSPLTL.

This sequence belongs to the RNA methyltransferase RlmH family. As to quaternary structure, homodimer.

The protein localises to the cytoplasm. It catalyses the reaction pseudouridine(1915) in 23S rRNA + S-adenosyl-L-methionine = N(3)-methylpseudouridine(1915) in 23S rRNA + S-adenosyl-L-homocysteine + H(+). Its function is as follows. Specifically methylates the pseudouridine at position 1915 (m3Psi1915) in 23S rRNA. The protein is Ribosomal RNA large subunit methyltransferase H of Edwardsiella ictaluri (strain 93-146).